The sequence spans 578 residues: Proline--tRNA ligase (578 aa).

It belongs to the class-II aminoacyl-tRNA synthetase family. ProS type 1 subfamily. In terms of assembly, homodimer.

The protein resides in the cytoplasm. It carries out the reaction tRNA(Pro) + L-proline + ATP = L-prolyl-tRNA(Pro) + AMP + diphosphate. Its function is as follows. Catalyzes the attachment of proline to tRNA(Pro) in a two-step reaction: proline is first activated by ATP to form Pro-AMP and then transferred to the acceptor end of tRNA(Pro). As ProRS can inadvertently accommodate and process non-cognate amino acids such as alanine and cysteine, to avoid such errors it has two additional distinct editing activities against alanine. One activity is designated as 'pretransfer' editing and involves the tRNA(Pro)-independent hydrolysis of activated Ala-AMP. The other activity is designated 'posttransfer' editing and involves deacylation of mischarged Ala-tRNA(Pro). The misacylated Cys-tRNA(Pro) is not edited by ProRS. The sequence is that of Proline--tRNA ligase from Paraburkholderia phymatum (strain DSM 17167 / CIP 108236 / LMG 21445 / STM815) (Burkholderia phymatum).